We begin with the raw amino-acid sequence, 404 residues long: Phosphoglycerate kinase (404 aa).

Residues 22 to 24 (DFN), Arg-37, 60 to 63 (HLGR), Arg-120, and Arg-160 contribute to the substrate site. Residues Lys-215, Glu-333, and 360–363 (GGDS) contribute to the ATP site.

It belongs to the phosphoglycerate kinase family. Monomer.

The protein localises to the cytoplasm. It carries out the reaction (2R)-3-phosphoglycerate + ATP = (2R)-3-phospho-glyceroyl phosphate + ADP. Its pathway is carbohydrate degradation; glycolysis; pyruvate from D-glyceraldehyde 3-phosphate: step 2/5. The protein is Phosphoglycerate kinase of Latilactobacillus sakei subsp. sakei (strain 23K) (Lactobacillus sakei subsp. sakei).